The chain runs to 307 residues: Golgi to ER traffic protein 2 (307 aa).

The Cytoplasmic portion of the chain corresponds to 1–173 (MSDSTDSPAV…QAYDTYQQKL (173 aa)). A compositionally biased stretch (polar residues) spans 41-52 (LSQGSSVKTTGV). The interval 41-73 (LSQGSSVKTTGVKSVLDEPQPTATSSAIHDEDP) is disordered. Residues 174–194 (WKSRFLVIRVVVTLFNFFYHY) traverse the membrane as a helical segment. The Lumenal segment spans residues 195–220 (LNVPSFHASNYSYVRDLAQDEFPVRN). Residues 221 to 240 (FFTWFAAFEVIIVLQYYTVF) form a helical membrane-spanning segment. The Cytoplasmic segment spans residues 241-284 (HKLGLFHAANQNSMIMKLMSMGSMVLPQLNTYQPLVARFLGYYE). Residues 285–305 (LFGIIFGDLSLVIVLFGLLSF) form a helical membrane-spanning segment. Topologically, residues 306–307 (TK) are lumenal.

The protein belongs to the GET2 family. As to quaternary structure, component of the Golgi to ER traffic (GET) complex, which is composed of GET1, GET2 and GET3. Within the complex, GET1 and GET2 form a heterotetramer which is stabilized by phosphatidylinositol binding and which binds to the GET3 homodimer.

It is found in the endoplasmic reticulum membrane. Its subcellular location is the golgi apparatus membrane. Functionally, required for the post-translational delivery of tail-anchored (TA) proteins to the endoplasmic reticulum. Together with GET1, acts as a membrane receptor for soluble GET3, which recognizes and selectively binds the transmembrane domain of TA proteins in the cytosol. The GET complex cooperates with the HDEL receptor ERD2 to mediate the ATP-dependent retrieval of resident ER proteins that contain a C-terminal H-D-E-L retention signal from the Golgi to the ER. The chain is Golgi to ER traffic protein 2 from Candida tropicalis (strain ATCC MYA-3404 / T1) (Yeast).